The sequence spans 434 residues: CinA-like protein (434 aa).

It belongs to the CinA family.

This chain is CinA-like protein, found in Mycobacterium avium (strain 104).